Here is an 826-residue protein sequence, read N- to C-terminus: Homeobox-leucine zipper protein HDG5 (826 aa).

Disordered regions lie at residues 1–34 (MLTM…IQNP) and 69–119 (EMME…HRHT). Over residues 23-34 (PSSSSPGTIQNP) the composition is skewed to low complexity. Residues 88-105 (EDPKFGNESDVNELHDDE) are compositionally biased toward basic and acidic residues. Positions 110–119 (AKKKRYHRHT) are enriched in basic residues. The homeobox DNA-binding region spans 111 to 170 (KKKRYHRHTNRQIQEMEALFKENPHPDDKQRKRLSAELGLKPRQVKFWFQNRRTQMKAQQ). The stretch at 165–189 (QMKAQQDRNENVMLRAENDNLKSEN) forms a coiled coil. The 245-residue stretch at 314-558 (ADEEKVIAME…LQRQCERIAS (245 aa)) folds into the START domain.

It belongs to the HD-ZIP homeobox family. Class IV subfamily. As to expression, expressed in shoot apical meristem (SAM) with higher levels in L1 cells and the epidermal layer of young leaves. Expressed in the L1 of apical inflorescence meristems, early flower primordia, carpel and stamen filament epidermis, ovule primordia, nucellus and chalaze.

The protein resides in the nucleus. Its function is as follows. Probable transcription factor. Involved, together with PDF2, in the regulation of flower organs development by promoting the expression of APETALA 3 (AP3) in the epidermis and internal cell layers of developing flowers. The polypeptide is Homeobox-leucine zipper protein HDG5 (Arabidopsis thaliana (Mouse-ear cress)).